A 201-amino-acid chain; its full sequence is Potassium-transporting ATPase KdpC subunit (201 aa).

A helical membrane pass occupies residues 10 to 30; it reads VLLVALTAVTGLAYPLAVTGI.

It belongs to the KdpC family. As to quaternary structure, the system is composed of three essential subunits: KdpA, KdpB and KdpC.

The protein resides in the cell inner membrane. Functionally, part of the high-affinity ATP-driven potassium transport (or Kdp) system, which catalyzes the hydrolysis of ATP coupled with the electrogenic transport of potassium into the cytoplasm. This subunit acts as a catalytic chaperone that increases the ATP-binding affinity of the ATP-hydrolyzing subunit KdpB by the formation of a transient KdpB/KdpC/ATP ternary complex. This is Potassium-transporting ATPase KdpC subunit from Methylorubrum extorquens (strain PA1) (Methylobacterium extorquens).